The chain runs to 315 residues: Archaeosortase A (315 aa).

A run of 7 helical transmembrane segments spans residues 12 to 32, 47 to 67, 74 to 94, 173 to 193, 204 to 224, 227 to 247, and 260 to 280; these read VIPY…AGVA, AGAW…FAFV, TVLI…VFAG, VVFE…IAAV, IALS…FIAL, GYQW…FGLT, and VLAQ…IARW. The Acyl-thioester intermediate role is filled by Cys-177. The active-site Proton donor is Arg-218.

Belongs to the exosortase/archaeosortase family. Archaeosortase A subfamily.

The protein localises to the cell membrane. Functionally, transpeptidase that recognizes and modifies its substrate by proteolytic cleavage of a sorting signal. Following cleavage, a covalent intermediate is formed via a thioester bond between the archaeosortase and its substrate, which is then transferred and covalently attached to the cell membrane. The polypeptide is Archaeosortase A (Natronomonas pharaonis (strain ATCC 35678 / DSM 2160 / CIP 103997 / JCM 8858 / NBRC 14720 / NCIMB 2260 / Gabara) (Halobacterium pharaonis)).